A 2715-amino-acid chain; its full sequence is Chromodomain-helicase-DNA-binding protein 6 (2715 aa).

The span at 1-11 shows a compositional bias: basic and acidic residues; that stretch reads MKMKIQKKEKQ. Disordered stretches follow at residues 1–30 and 66–244; these read MKMK…SVNF and EEAA…QVKR. Residues 1–747 form a required for DNA-dependent ATPase activity region; the sequence is MKMKIQKKEK…MMELRKCCNH (747 aa). Positions 12-27 are enriched in polar residues; it reads LSNLKVLNHSPMSDAS. Over residues 123-172 the composition is skewed to basic and acidic residues; that stretch reads EPKEPKEPRKAKEPKKAKEHKEPKQKDGAKKARKPREASGTKEAKEKRSC. 2 consecutive Chromo domains span residues 292-343 and 375-439; these read NIIE…KDPR and VEVD…KHVE. A Helicase ATP-binding domain is found at 473-647; the sequence is LFNWYNRKNC…FSLLNFLEPS (175 aa). Residue 486 to 493 participates in ATP binding; the sequence is DEMGLGKT. Positions 598–601 match the DEAH box motif; the sequence is DEAH. The region spanning 787 to 956 is the Helicase C-terminal domain; sequence LIDKLLPKLI…LSKMEVEDLL (170 aa). A disordered region spans residues 1318-1390; sequence KSLSAEQGVT…SDPDKSPWPV (73 aa). Residues 1321 to 1330 show a composition bias toward polar residues; it reads SAEQGVTDGT. 2 stretches are compositionally biased toward basic and acidic residues: residues 1333-1351 and 1367-1376; these read IPER…KVDG and FSEKKDDSRA. A Myb-like domain is found at 1449–1503; the sequence is RWTRREQADFYRTVSSFGVVYDQEKKTFDWTQFRIISRLDKKSDESLEQYFYSFV. Positions 2027 to 2038 are enriched in basic and acidic residues; the sequence is FENKDDYDRDGN. Disordered regions lie at residues 2027–2063, 2116–2148, 2321–2351, 2373–2422, 2547–2602, and 2648–2715; these read FENK…ITGD, SQQY…AAEH, QATL…QAEK, PGFG…FLPE, TSTA…PAIT, and VGLE…NDTN. The span at 2116 to 2141 shows a compositional bias: polar residues; it reads SQQYEPSGTLPTPVLTSSAGSRTSLS. A compositionally biased stretch (low complexity) spans 2329-2346; it reads PEGPGPATSAPEPATAAS. Residues 2547–2560 are compositionally biased toward low complexity; sequence TSTAPASLSSTTKS. Composition is skewed to basic and acidic residues over residues 2567-2588 and 2706-2715; these read KTAE…EDKP and ALKDSNNDTN.

The protein belongs to the SNF2/RAD54 helicase family. In terms of assembly, interacts with NFE2L2; involved in activation of the transcription. (Microbial infection) Interacts with the influenza A polymerase complex composed fo PB1, PB2 and PA. As to quaternary structure, (Microbial infection) Interacts (via N-terminus) with human papillomavirus protein E8^E2C (via C-terminus); this interaction induces transcriptional repression of the viral genome. Widely expressed.

The protein resides in the nucleus. It localises to the nucleoplasm. The catalysed reaction is ATP + H2O = ADP + phosphate + H(+). Its function is as follows. ATP-dependent chromatin-remodeling factor. Regulates transcription by disrupting nucleosomes in a largely non-sliding manner which strongly increases the accessibility of chromatin; nucleosome disruption requires ATP. Activates transcription of specific genes in response to oxidative stress through interaction with NFE2L2. In terms of biological role, (Microbial infection) Acts as a transcriptional repressor of different viruses including influenza virus or papillomavirus. During influenza virus infection, the viral polymerase complex localizes CHD6 to inactive chromatin where it gets degraded in a proteasome independent-manner. The chain is Chromodomain-helicase-DNA-binding protein 6 (CHD6) from Homo sapiens (Human).